A 258-amino-acid polypeptide reads, in one-letter code: MSPAIALAFLPLVVTLLVRYRHHFRLLVRTVLLRGFRDCLSGLRIEERAFSYVLTHALPGDPGHILTTLDHWSSCCEYLSHMGPVKGQILMRLVEEKAPACVLELGTYCGYSTLLIARALPPGSRLLTVERDSRTAAVAEKVIRLAGFDEQMVELIAGSSEEVIPRLRAQHQLNRADLVLLAHRPRYYLRDLQLLEAHALLPHGATVLADHVLFPGAPRFLQYTKSCGRYRCRLHHTSLPDFPAIKDGIAQLTYTGPG.

Residues glutamate 104, 106 to 107 (GT), serine 112, glutamate 130, and serine 160 each bind S-adenosyl-L-methionine.

It belongs to the class I-like SAM-binding methyltransferase superfamily. Cation-dependent O-methyltransferase family. In terms of assembly, interacts with LHFPL5, PCDH15, TMC1, TMC2 and TMIE. The interaction of TOMT with TMC1 and TMC2 is required for the transportation of TMC1/2 into the stereocilia of hair cells. Interacts directly with TMC1. Widely expressed with high levels in outer and inner hair cells of the cochlea and vestibule.

It is found in the cytoplasm. The protein resides in the endoplasmic reticulum. It carries out the reaction a catechol + S-adenosyl-L-methionine = a guaiacol + S-adenosyl-L-homocysteine + H(+). Functionally, catalyzes the O-methylation, and thereby the inactivation, of catecholamine neurotransmitters and catechol hormones. Required for auditory function. Component of the cochlear hair cell's mechanotransduction (MET) machinery. Involved in the assembly of the asymmetric tip-link MET complex. Required for transportation of TMC1 and TMC2 proteins into the mechanically sensitive stereocilia of the hair cells. The function in MET is independent of the enzymatic activity. The polypeptide is Transmembrane O-methyltransferase homolog (Mus musculus (Mouse)).